Here is a 1597-residue protein sequence, read N- to C-terminus: Pentafunctional AROM polypeptide (1597 aa).

The 3-dehydroquinate synthase stretch occupies residues 1–384 (MGVPTKISIL…HEPRASTVSN (384 aa)). Residues 44 to 46 (DTN), 81 to 84 (ESSK), 114 to 116 (GGV), and Asp119 each bind NAD(+). Position 130 (Arg130) interacts with 7-phospho-2-dehydro-3-deoxy-D-arabino-heptonate. Residue 139–140 (TT) coordinates NAD(+). Residues Asp146 and Lys152 each contribute to the 7-phospho-2-dehydro-3-deoxy-D-arabino-heptonate site. NAD(+) is bound at residue Lys161. Asn162 contributes to the 7-phospho-2-dehydro-3-deoxy-D-arabino-heptonate binding site. Residues 179–182 (FLNT) and Asn190 contribute to the NAD(+) site. Residue Glu194 participates in Zn(2+) binding. 7-phospho-2-dehydro-3-deoxy-D-arabino-heptonate is bound by residues 194–197 (EVIK) and Lys250. Glu260 acts as the Proton acceptor; for 3-dehydroquinate synthase activity in catalysis. Residues 264–268 (RNLLN) and His271 each bind 7-phospho-2-dehydro-3-deoxy-D-arabino-heptonate. His271 lines the Zn(2+) pocket. His275 serves as the catalytic Proton acceptor; for 3-dehydroquinate synthase activity. Positions 287 and 356 each coordinate 7-phospho-2-dehydro-3-deoxy-D-arabino-heptonate. His287 contacts Zn(2+). Residues 397-842 (VSPGVPKNLN…WDSLAQTFKV (446 aa)) are EPSP synthase. Catalysis depends on Cys824, which acts as the For EPSP synthase activity. The segment at 866-1057 (ASIFIIGMRG…RSKENTFFVS (192 aa)) is shikimate kinase. An ATP-binding site is contributed by 872–879 (GMRGAGKT). The 3-dehydroquinase stretch occupies residues 1058 to 1278 (LTLPDLAPAA…AAPGQLSARE (221 aa)). The active-site Proton acceptor; for 3-dehydroquinate dehydratase activity is the His1181. The active-site Schiff-base intermediate with substrate; for 3-dehydroquinate dehydratase activity is the Lys1209. The segment at 1291 to 1597 (SKKFAVIGNP…VQPKDDDIST (307 aa)) is shikimate dehydrogenase.

In the N-terminal section; belongs to the sugar phosphate cyclases superfamily. Dehydroquinate synthase family. The protein in the 2nd section; belongs to the EPSP synthase family. This sequence in the 3rd section; belongs to the shikimate kinase family. It in the 4th section; belongs to the type-I 3-dehydroquinase family. In the C-terminal section; belongs to the shikimate dehydrogenase family. In terms of assembly, homodimer. It depends on Zn(2+) as a cofactor.

It localises to the cytoplasm. It catalyses the reaction 7-phospho-2-dehydro-3-deoxy-D-arabino-heptonate = 3-dehydroquinate + phosphate. It carries out the reaction 3-dehydroquinate = 3-dehydroshikimate + H2O. The catalysed reaction is shikimate + NADP(+) = 3-dehydroshikimate + NADPH + H(+). The enzyme catalyses shikimate + ATP = 3-phosphoshikimate + ADP + H(+). It catalyses the reaction 3-phosphoshikimate + phosphoenolpyruvate = 5-O-(1-carboxyvinyl)-3-phosphoshikimate + phosphate. It participates in metabolic intermediate biosynthesis; chorismate biosynthesis; chorismate from D-erythrose 4-phosphate and phosphoenolpyruvate: step 2/7. Its pathway is metabolic intermediate biosynthesis; chorismate biosynthesis; chorismate from D-erythrose 4-phosphate and phosphoenolpyruvate: step 3/7. It functions in the pathway metabolic intermediate biosynthesis; chorismate biosynthesis; chorismate from D-erythrose 4-phosphate and phosphoenolpyruvate: step 4/7. The protein operates within metabolic intermediate biosynthesis; chorismate biosynthesis; chorismate from D-erythrose 4-phosphate and phosphoenolpyruvate: step 5/7. It participates in metabolic intermediate biosynthesis; chorismate biosynthesis; chorismate from D-erythrose 4-phosphate and phosphoenolpyruvate: step 6/7. The AROM polypeptide catalyzes 5 consecutive enzymatic reactions in prechorismate polyaromatic amino acid biosynthesis. The polypeptide is Pentafunctional AROM polypeptide (Ajellomyces dermatitidis (strain ER-3 / ATCC MYA-2586) (Blastomyces dermatitidis)).